A 287-amino-acid polypeptide reads, in one-letter code: MRQIAFYGKGGIGKSTTQQNTMAAMAEMGRRVMIVGCDPKADSTRLILHSKAQTSVIKLAAEKGSVEDLELNEVLVEGQWGIKCVESGGPEPGVGCAGRGVITSITYLEEAGAYENLDFVTYDVLGDVVCGGFAMPIRQGKAQEIYIVTSGEMMAMYAANNIARGVLKYGHSGGVRLGGLICNSRNTDREDELIIELARRLNTQMIHFIPRNNVVQHAEVRRMTVIEYDPQNSQANEYRQLAKKIDNNEMKTIPTPIRMDELEELLIEFGIMEQEDESIIAKANATS.

An ATP-binding site is contributed by 8–15 (GKGGIGKS). A [4Fe-4S] cluster-binding site is contributed by cysteine 96. Arginine 99 bears the ADP-ribosylarginine; by dinitrogenase reductase ADP-ribosyltransferase mark. Cysteine 130 serves as a coordination point for [4Fe-4S] cluster.

It belongs to the NifH/BchL/ChlL family. As to quaternary structure, homodimer. [4Fe-4S] cluster serves as cofactor. Post-translationally, the reversible ADP-ribosylation of Arg-99 inactivates the nitrogenase reductase and regulates nitrogenase activity.

The enzyme catalyses N2 + 8 reduced [2Fe-2S]-[ferredoxin] + 16 ATP + 16 H2O = H2 + 8 oxidized [2Fe-2S]-[ferredoxin] + 2 NH4(+) + 16 ADP + 16 phosphate + 6 H(+). Its function is as follows. The key enzymatic reactions in nitrogen fixation are catalyzed by the nitrogenase complex, which has 2 components: the iron protein and the molybdenum-iron protein. In Frankia sp. (strain EuIK1), this protein is Nitrogenase iron protein (nifH).